A 236-amino-acid chain; its full sequence is GCN5-related N-acetyltransferase 8 (236 aa).

Positions 96 to 235 (ATITSSPSPD…DALEAFDQVN (140 aa)) constitute an N-acetyltransferase domain. Residues 161-163 (IFV), 169-174 (RKGFGS), 200-202 (NVN), and tyrosine 207 each bind acetyl-CoA. Tyrosine 207 acts as the Proton donor in catalysis.

This sequence belongs to the acetyltransferase family. GNAT subfamily. In terms of assembly, oligomer. In terms of tissue distribution, expressed throughout the plant.

It localises to the cytoplasm. It is found in the nucleus. The enzyme catalyses an N-terminal L-alpha-aminoacyl-[protein] + acetyl-CoA = N-terminal N(alpha)-acetyl-L-alpha-aminoacyl-[protein] + CoA + H(+). It carries out the reaction L-lysyl-[protein] + acetyl-CoA = N(6)-acetyl-L-lysyl-[protein] + CoA + H(+). Probable protein acetyltransferase with dual specificity triggering both N-alpha-acetylation (NTA) and epsilon-lysine acetylation (KA). The protein is GCN5-related N-acetyltransferase 8 of Arabidopsis thaliana (Mouse-ear cress).